We begin with the raw amino-acid sequence, 117 residues long: Ig heavy chain V region 3 (117 aa).

Positions 1-19 are cleaved as a signal peptide; it reads MGWSCIILFLVATATGVHS. The tract at residues 20-49 is framework-1; the sequence is QVQLQQPGAELVRPGSSVKLSCKASGYTFT. Cys-41 and Cys-115 form a disulfide bridge. The interval 50 to 54 is complementarity-determining-1; that stretch reads SYWMD. The segment at 55–68 is framework-2; the sequence is WVKQRPGQGLEWIG. Residues 69–85 form a complementarity-determining-2 region; that stretch reads NIYPSDSETHYNQKFKD. A framework-3 region spans residues 86–117; the sequence is KATLTVDKSSSTAYMQLSSLTSEDSAVYYCAR.

In Mus musculus (Mouse), this protein is Ig heavy chain V region 3 (Ighv1-61).